A 699-amino-acid chain; its full sequence is Polyribonucleotide nucleotidyltransferase (699 aa).

D485 and D491 together coordinate Mg(2+). The KH domain occupies 552–611 (PRITVIKINPEKIRDVIGKGGAVIRALTEETGTTIELEDDGTVKIASSNGEATKEAIRRI). Positions 621–689 (GRIYNGKVIR…RQGRVRLSIK (69 aa)) constitute an S1 motif domain.

The protein belongs to the polyribonucleotide nucleotidyltransferase family. In terms of assembly, component of the RNA degradosome, which is a multiprotein complex involved in RNA processing and mRNA degradation. It depends on Mg(2+) as a cofactor.

The protein resides in the cytoplasm. It catalyses the reaction RNA(n+1) + phosphate = RNA(n) + a ribonucleoside 5'-diphosphate. Functionally, involved in mRNA degradation. Catalyzes the phosphorolysis of single-stranded polyribonucleotides processively in the 3'- to 5'-direction. In Shewanella baltica (strain OS223), this protein is Polyribonucleotide nucleotidyltransferase.